The sequence spans 452 residues: Elongation factor Tu, mitochondrial (452 aa).

Residues 1-43 (MAAATLLRATPLFSGLGAGPAPLLQGLLRPLKAQALPVLCRGL) constitute a mitochondrion transit peptide. Residues 55-251 (KPHVNVGTIG…AVDTYIPVPT (197 aa)) form the tr-type G domain. Positions 64 to 71 (GHVDHGKT) are G1. 5 residues coordinate GTP: Asp-67, Gly-69, Lys-70, Thr-71, and Thr-72. A Mg(2+)-binding site is contributed by Thr-71. Lys-79 is modified (N6-acetyllysine). Lys-88 carries the post-translational modification N6-acetyllysine; alternate. The residue at position 88 (Lys-88) is an N6-succinyllysine; alternate. The G2 stretch occupies residues 105–109 (GITIN). The G3 stretch occupies residues 126 to 129 (DCPG). The GTP site is built by Asn-181, Asp-184, Ser-219, Ala-220, and Leu-221. The segment at 181-184 (NKAD) is G4. The tract at residues 219-221 (SAL) is G5. Lys-234 is modified (N6-succinyllysine). At Lys-256 the chain carries N6-acetyllysine. At Thr-278 the chain carries Phosphothreonine. Lys-286 carries the post-translational modification N6-succinyllysine. Ser-312 is subject to Phosphoserine. N6-acetyllysine occurs at positions 361 and 418.

This sequence belongs to the TRAFAC class translation factor GTPase superfamily. Classic translation factor GTPase family. EF-Tu/EF-1A subfamily. In terms of assembly, interacts with NLRX1. Interacts with ATG16L1.

Its subcellular location is the mitochondrion. The catalysed reaction is GTP + H2O = GDP + phosphate + H(+). In terms of biological role, GTP hydrolase that promotes the GTP-dependent binding of aminoacyl-tRNA to the A-site of ribosomes during protein biosynthesis. Also plays a role in the regulation of autophagy and innate immunity. Recruits ATG5-ATG12 and NLRX1 at mitochondria and serves as a checkpoint of the RIGI-MAVS pathway. In turn, inhibits RLR-mediated type I interferon while promoting autophagy. In Bos taurus (Bovine), this protein is Elongation factor Tu, mitochondrial (TUFM).